An 876-amino-acid polypeptide reads, in one-letter code: Alanine--tRNA ligase (876 aa).

Zn(2+) is bound by residues His-564, His-568, Cys-666, and His-670.

This sequence belongs to the class-II aminoacyl-tRNA synthetase family. Zn(2+) is required as a cofactor.

The protein resides in the cytoplasm. The catalysed reaction is tRNA(Ala) + L-alanine + ATP = L-alanyl-tRNA(Ala) + AMP + diphosphate. Its function is as follows. Catalyzes the attachment of alanine to tRNA(Ala) in a two-step reaction: alanine is first activated by ATP to form Ala-AMP and then transferred to the acceptor end of tRNA(Ala). Also edits incorrectly charged Ser-tRNA(Ala) and Gly-tRNA(Ala) via its editing domain. The protein is Alanine--tRNA ligase of Porphyromonas gingivalis (strain ATCC BAA-308 / W83).